The primary structure comprises 614 residues: Vitamin B12 transporter BtuB (614 aa).

An N-terminal signal peptide occupies residues methionine 1–alanine 20. The TonB box motif lies at aspartate 26 to asparagine 33. One can recognise a TBDR plug domain in the interval proline 38–threonine 152. Residues leucine 83, serine 85, asparagine 92, and valine 110 to serine 111 contribute to the cyanocob(III)alamin site. Residues glutamate 155–phenylalanine 614 form the TBDR beta-barrel domain. 3 beta stranded membrane-spanning segments follow: residues threonine 158–glycine 165, tyrosine 169–glutamine 178, and threonine 184–threonine 195. Ca(2+)-binding residues include aspartate 199, glutamine 211, aspartate 213, and aspartate 215. A run of 2 beta stranded transmembrane segments spans residues phenylalanine 217–glutamate 227 and aspartate 232–asparagine 248. Residues tyrosine 249 and aspartate 250 each coordinate Ca(2+). Alanine 251 contacts cyanocob(III)alamin. Aspartate 261 serves as a coordination point for Ca(2+). 14 beta stranded membrane-spanning segments follow: residues arginine 263–asparagine 277, glutamate 279–asparagine 296, threonine 309–isoleucine 325, histidine 328–tryptophan 337, tyrosine 353–glycine 369, phenylalanine 371–aspartate 381, phenylalanine 385–isoleucine 400, tyrosine 403–asparagine 417, lysine 434–glutamate 443, valine 449–asparagine 458, tyrosine 473–phenylalanine 490, proline 494–alanine 509, arginine 517–tryptophan 529, and aspartate 535–aspartate 550. Threonine 309 lines the cyanocob(III)alamin pocket. Cyanocob(III)alamin is bound at residue arginine 517. Tyrosine 551 is a cyanocob(III)alamin binding site. 3 beta stranded membrane passes run threonine 558–alanine 572, isoleucine 585–valine 596, and alanine 602–phenylalanine 614. Residues tyrosine 597 to phenylalanine 614 carry the TonB C-terminal box motif.

This sequence belongs to the TonB-dependent receptor family. BtuB (TC 1.B.14.3.1) subfamily.

It localises to the cell outer membrane. Its function is as follows. Involved in the active translocation of vitamin B12 (cyanocobalamin) across the outer membrane to the periplasmic space. It derives its energy for transport by interacting with the trans-periplasmic membrane protein TonB. The protein is Vitamin B12 transporter BtuB of Shigella dysenteriae serotype 1 (strain Sd197).